We begin with the raw amino-acid sequence, 300 residues long: 4-hydroxy-tetrahydrodipicolinate synthase (300 aa).

Residue threonine 46 participates in pyruvate binding. Tyrosine 134 acts as the Proton donor/acceptor in catalysis. Catalysis depends on lysine 162, which acts as the Schiff-base intermediate with substrate. Isoleucine 207 is a binding site for pyruvate.

Belongs to the DapA family. As to quaternary structure, homotetramer; dimer of dimers.

It localises to the cytoplasm. It catalyses the reaction L-aspartate 4-semialdehyde + pyruvate = (2S,4S)-4-hydroxy-2,3,4,5-tetrahydrodipicolinate + H2O + H(+). The protein operates within amino-acid biosynthesis; L-lysine biosynthesis via DAP pathway; (S)-tetrahydrodipicolinate from L-aspartate: step 3/4. Functionally, catalyzes the condensation of (S)-aspartate-beta-semialdehyde [(S)-ASA] and pyruvate to 4-hydroxy-tetrahydrodipicolinate (HTPA). The chain is 4-hydroxy-tetrahydrodipicolinate synthase from Protochlamydia amoebophila (strain UWE25).